We begin with the raw amino-acid sequence, 530 residues long: Autoinducer-2 kinase (530 aa).

It belongs to the FGGY kinase family.

Its subcellular location is the cytoplasm. The catalysed reaction is (S)-4,5-dihydroxypentane-2,3-dione + ATP = (2S)-2-hydroxy-3,4-dioxopentyl phosphate + ADP + H(+). Catalyzes the phosphorylation of autoinducer-2 (AI-2) to phospho-AI-2, which subsequently inactivates the transcriptional regulator LsrR and leads to the transcription of the lsr operon. Phosphorylates the ring-open form of (S)-4,5-dihydroxypentane-2,3-dione (DPD), which is the precursor to all AI-2 signaling molecules, at the C5 position. The chain is Autoinducer-2 kinase from Yersinia pseudotuberculosis serotype O:3 (strain YPIII).